Reading from the N-terminus, the 406-residue chain is Serine hydroxymethyltransferase (406 aa).

Residues L111 and 115–117 each bind (6S)-5,6,7,8-tetrahydrofolate; that span reads GHL. The residue at position 220 (K220) is an N6-(pyridoxal phosphate)lysine.

The protein belongs to the SHMT family. Homodimer. Pyridoxal 5'-phosphate is required as a cofactor.

Its subcellular location is the cytoplasm. It carries out the reaction (6R)-5,10-methylene-5,6,7,8-tetrahydrofolate + glycine + H2O = (6S)-5,6,7,8-tetrahydrofolate + L-serine. It participates in one-carbon metabolism; tetrahydrofolate interconversion. The protein operates within amino-acid biosynthesis; glycine biosynthesis; glycine from L-serine: step 1/1. Functionally, catalyzes the reversible interconversion of serine and glycine with tetrahydrofolate (THF) serving as the one-carbon carrier. This reaction serves as the major source of one-carbon groups required for the biosynthesis of purines, thymidylate, methionine, and other important biomolecules. Also exhibits THF-independent aldolase activity toward beta-hydroxyamino acids, producing glycine and aldehydes, via a retro-aldol mechanism. This chain is Serine hydroxymethyltransferase, found in Mycoplasma pneumoniae (strain ATCC 29342 / M129 / Subtype 1) (Mycoplasmoides pneumoniae).